The following is a 146-amino-acid chain: Phospholipase A2 147 (146 aa).

The signal sequence occupies residues methionine 1–alanine 19. Residues alanine 20–leucine 27 constitute a propeptide that is removed on maturation. 7 disulfide bridges follow: cysteine 38/cysteine 98, cysteine 54/cysteine 145, cysteine 56/cysteine 72, cysteine 71/cysteine 126, cysteine 78/cysteine 119, cysteine 87/cysteine 112, and cysteine 105/cysteine 117. Tyrosine 55, glycine 57, and glycine 59 together coordinate Ca(2+). The active site involves histidine 75. Residue aspartate 76 coordinates Ca(2+). Residue aspartate 120 is part of the active site.

The protein belongs to the phospholipase A2 family. Group I subfamily. D49 sub-subfamily. The cofactor is Ca(2+). In terms of tissue distribution, expressed by the venom gland.

It localises to the secreted. The enzyme catalyses a 1,2-diacyl-sn-glycero-3-phosphocholine + H2O = a 1-acyl-sn-glycero-3-phosphocholine + a fatty acid + H(+). Functionally, snake venom phospholipase A2 (PLA2) that inhibits collagen-induced platelet aggregation. PLA2 catalyzes the calcium-dependent hydrolysis of the 2-acyl groups in 3-sn-phosphoglycerides. This is Phospholipase A2 147 from Drysdalia coronoides (White-lipped snake).